The chain runs to 472 residues: Acyltransferase PapA3 (472 aa).

Belongs to the PapA acyltransferase family.

It carries out the reaction a long-chain fatty acyl-CoA + alpha,alpha-trehalose = a 2-O-(long-chain fatty acyl)-alpha,alpha-trehalose + CoA. The catalysed reaction is a mycolipenoyl-CoA + a 2-O-(long-chain fatty acyl)-alpha,alpha-trehalose = a 2-O-(long-chain fatty acyl)-3-O-mycolipenoyl-trehalose + CoA. It catalyses the reaction alpha,alpha-trehalose + hexadecanoyl-CoA = 2-O-hexadecanoyl-alpha,alpha-trehalose + CoA. The enzyme catalyses 2-O-hexadecanoyl-alpha,alpha-trehalose + hexadecanoyl-CoA = 2-O,3-O-dihexadecanoyl-alpha,alpha-trehalose + CoA. Functionally, involved in the biosynthesis of polyacyltrehalose (PAT), a pentaacylated, trehalose-based glycolipid that could have a role in anchoring the bacterial capsule. Catalyzes the sequential transfer of two palmitoyl groups onto a single glucose residue of trehalose generating the diacylated product 2,3-diacyltrehalose (trehalose dipalmitate). The sequence is that of Acyltransferase PapA3 (papA3) from Mycobacterium tuberculosis (strain CDC 1551 / Oshkosh).